A 135-amino-acid polypeptide reads, in one-letter code: Large ribosomal subunit protein uL18 (135 aa).

The tract at residues 1-25 (MAQTENQKSKRIPLGKDVSTQRRLS) is disordered.

The protein belongs to the universal ribosomal protein uL18 family. Part of the 50S ribosomal subunit; part of the 5S rRNA/L5/L18/L25 subcomplex. Contacts the 5S and 23S rRNAs.

In terms of biological role, this is one of the proteins that bind and probably mediate the attachment of the 5S RNA into the large ribosomal subunit, where it forms part of the central protuberance. This chain is Large ribosomal subunit protein uL18, found in Nocardia farcinica (strain IFM 10152).